The sequence spans 142 residues: Class II hydrophobin 7 (142 aa).

An N-terminal signal peptide occupies residues 1–16 (MKFLTVAIVLAAAASA). Disulfide bonds link C73/C123, C84/C114, C85/C97, and C124/C135.

The protein belongs to the cerato-ulmin hydrophobin family. In terms of assembly, homodimer. Homodimers further self-assemble to form highly ordered films at water-air interfaces through intermolecular interactions.

It is found in the secreted. Its subcellular location is the cell wall. In terms of biological role, aerial growth, conidiation, and dispersal of filamentous fungi in the environment rely upon a capability of their secreting small amphipathic proteins called hydrophobins (HPBs) with low sequence identity. Class I can self-assemble into an outermost layer of rodlet bundles on aerial cell surfaces, conferring cellular hydrophobicity that supports fungal growth, development and dispersal; whereas Class II form highly ordered films at water-air interfaces through intermolecular interactions but contribute nothing to the rodlet structure. This is Class II hydrophobin 7 from Trichoderma asperellum (strain ATCC 204424 / CBS 433.97 / NBRC 101777).